The primary structure comprises 315 residues: Initiation factor TFIIB homolog (315 aa).

This sequence belongs to the asfivirus C315R family.

Putative initation factor. The chain is Initiation factor TFIIB homolog from African swine fever virus (strain Badajoz 1971 Vero-adapted) (Ba71V).